A 176-amino-acid chain; its full sequence is Ribosome maturation factor RimP (176 aa).

Positions 143–176 (LKPQTAKKKGRQEETEDMTLELDAVSRAVPEAEI) are disordered.

Belongs to the RimP family.

It localises to the cytoplasm. Functionally, required for maturation of 30S ribosomal subunits. The polypeptide is Ribosome maturation factor RimP (Chlorobium luteolum (strain DSM 273 / BCRC 81028 / 2530) (Pelodictyon luteolum)).